We begin with the raw amino-acid sequence, 177 residues long: Ubiquinol-cytochrome c reductase iron-sulfur subunit (177 aa).

The chain crosses the membrane as a helical span at residues 18–38 (MVLTASSVAAVGAVCTLWPLV). One can recognise a Rieske domain in the interval 88–175 (ARAVKMSELI…YTFISDKKIR (88 aa)). 4 residues coordinate [2Fe-2S] cluster: Cys-120, His-122, Cys-139, and His-142. Cys-125 and Cys-141 are oxidised to a cystine.

Belongs to the Rieske iron-sulfur protein family. The main subunits of complex b-c1 are: cytochrome b, cytochrome c1 and the Rieske protein. The cofactor is [2Fe-2S] cluster.

The protein localises to the cell membrane. The catalysed reaction is a quinol + 2 Fe(III)-[cytochrome c](out) = a quinone + 2 Fe(II)-[cytochrome c](out) + 2 H(+)(out). Component of the ubiquinol-cytochrome c reductase complex (complex III or cytochrome b-c1 complex), which is a respiratory chain that generates an electrochemical potential coupled to ATP synthesis. The chain is Ubiquinol-cytochrome c reductase iron-sulfur subunit (petA) from Rickettsia felis (strain ATCC VR-1525 / URRWXCal2) (Rickettsia azadi).